A 109-amino-acid chain; its full sequence is Fluoride-specific ion channel FluC 1 (109 aa).

Helical transmembrane passes span 1-21, 29-49, 55-75, and 87-107; these read MVIV…YFFS, LPLG…VFYN, EVYA…STLN, and VFYS…FLGI. Residues Gly-66 and Thr-69 each contribute to the Na(+) site.

The protein belongs to the fluoride channel Fluc/FEX (TC 1.A.43) family.

It localises to the cell membrane. The catalysed reaction is fluoride(in) = fluoride(out). With respect to regulation, na(+) is not transported, but it plays an essential structural role and its presence is essential for fluoride channel function. Functionally, fluoride-specific ion channel. Important for reducing fluoride concentration in the cell, thus reducing its toxicity. In Streptococcus pneumoniae serotype 4 (strain ATCC BAA-334 / TIGR4), this protein is Fluoride-specific ion channel FluC 1.